A 296-amino-acid chain; its full sequence is Chronophin (296 aa).

The active-site Nucleophile is Asp25. Positions 25 and 27 each coordinate Mg(2+). Asn27 (proton donor) is an active-site residue. Residues 58–60, His182, and Lys213 contribute to the substrate site; that span reads SNN. Mg(2+) is bound at residue Asp238.

It belongs to the HAD-like hydrolase superfamily. Homodimer. It depends on Mg(2+) as a cofactor. As to expression, detected in brain (at protein level).

The protein resides in the cytoplasm. Its subcellular location is the cytosol. It is found in the cytoskeleton. It localises to the cell projection. The protein localises to the ruffle membrane. The protein resides in the lamellipodium membrane. Its subcellular location is the cell membrane. It catalyses the reaction pyridoxal 5'-phosphate + H2O = pyridoxal + phosphate. It carries out the reaction pyridoxine 5'-phosphate + H2O = pyridoxine + phosphate. The enzyme catalyses pyridoxamine + phosphate = pyridoxamine 5'-phosphate + H2O. The catalysed reaction is O-phospho-L-seryl-[protein] + H2O = L-seryl-[protein] + phosphate. In terms of biological role, functions as a pyridoxal phosphate (PLP) phosphatase, which also catalyzes the dephosphorylation of pyridoxine 5'-phosphate (PNP) and pyridoxamine 5'-phosphate (PMP), with order of substrate preference PLP &gt; PNP &gt; PMP and therefore plays a role in vitamin B6 metabolism. Also functions as a protein serine phosphatase that specifically dephosphorylates 'Ser-3' in proteins of the actin-depolymerizing factor (ADF)/cofilin family like CFL1 and DSTN. Thereby, regulates cofilin-dependent actin cytoskeleton reorganization, being required for normal progress through mitosis and normal cytokinesis. Does not dephosphorylate phosphothreonines in LIMK1. Does not dephosphorylate peptides containing phosphotyrosine. In Bos taurus (Bovine), this protein is Chronophin.